The sequence spans 648 residues: DNA helicase/primase complex-associated protein (648 aa).

The interval 43–63 (LWPSDQNNTASPAGAKTDQPT) is disordered.

This sequence belongs to the herpesviridae HEPA family. In terms of assembly, associates with the primase and the helicase to form the helicase-primase complex. Interacts with the origin-binding protein. Interacts with the polymerase catalytic subunit.

Its subcellular location is the host nucleus. In terms of biological role, component of the helicase/primase complex. Unwinds the DNA at the replication forks and generates single-stranded DNA for both leading and lagging strand synthesis. The primase synthesizes short RNA primers on the lagging strand that the polymerase presumably elongates using dNTPs. The primase-associated factor has no known catalytic activity in the complex and may serve to facilitate the formation of the replisome by directly interacting with the origin-binding protein and the polymerase. This Amazona oratrix (yellow-headed parrot) protein is DNA helicase/primase complex-associated protein (UL8).